Consider the following 520-residue polypeptide: Tubby-related protein 2 (520 aa).

Phosphoserine is present on residues S135 and S190. The interval 141 to 236 (EVSVENGSVS…GTNSSAAHNE (96 aa)) is disordered. A compositionally biased stretch (basic and acidic residues) spans 211 to 223 (QKEEDLEKKREAS). Polar residues predominate over residues 224–233 (ESTGTNSSAA).

The protein belongs to the TUB family. Strongly expressed in testis. Also expressed in retina. Expressed in cancer cell lines.

It is found in the cytoplasm. The protein localises to the secreted. The chain is Tubby-related protein 2 (TULP2) from Homo sapiens (Human).